The primary structure comprises 281 residues: MNPPESSPLGKASACVDQYDATLLFPIARADQRAELGISGAAPFFGADLWTAFELSWLNQRGKPQVALAHITVPCETPRIVESKSFKLYLNSFSNTRFADAAQVQARIRADVSAAVWRGAASAGSVGVTLLGPDRFAQELMQELDGLSLDRLDVQCTQYQPAPELLSAQHDAAPVSERLTSQLLKSNCPVTGQPDWASVQIAYRGPPIDQEGLLQYLVSFRNHSGFHEQCVERIFMDLWTRCQPIELTVYARYTRRGGLDINPLRTSHPQGLPRNMRTARQ.

81 to 83 (VES) lines the substrate pocket. NADPH is bound at residue 83 to 84 (SK). Cysteine 188 functions as the Thioimide intermediate in the catalytic mechanism. The Proton donor role is filled by aspartate 195. 227-228 (HE) serves as a coordination point for substrate. An NADPH-binding site is contributed by 256-257 (RG). The interval 261 to 281 (INPLRTSHPQGLPRNMRTARQ) is disordered.

This sequence belongs to the GTP cyclohydrolase I family. QueF type 2 subfamily. Homodimer.

It is found in the cytoplasm. It carries out the reaction 7-aminomethyl-7-carbaguanine + 2 NADP(+) = 7-cyano-7-deazaguanine + 2 NADPH + 3 H(+). It functions in the pathway tRNA modification; tRNA-queuosine biosynthesis. Catalyzes the NADPH-dependent reduction of 7-cyano-7-deazaguanine (preQ0) to 7-aminomethyl-7-deazaguanine (preQ1). In Verminephrobacter eiseniae (strain EF01-2), this protein is NADPH-dependent 7-cyano-7-deazaguanine reductase.